The primary structure comprises 518 residues: MVSDFGLPTFISATELLLASAVFCLVFWVAGASKPRVPKGLKRLPGPWGWPLLGHVLTLGKNPHVALARLSRRYGDVFQIRLGSTPVVVLSGLDTIKQALVRQGDDFKGRPDLYSFSFVTKGQSMIFGSDSGPVWAARRRLAQNALNSFSVASDPASSSSCYLEEHVSQEAENLISKFQELMAAVGHFDPYRYVVMSVANVICAMCFGRRYDHDDQELLSLVNLNDEFGKVAASGSPADFFLILRYLPNPALDTFKDLNERFYSFTQERVKEHCRSFEKGHIRDITDSLIKHYRVDRLDENANVQVSDEKTVGIVLDLFGAGFDTVTTAISWSLMYLVTKPRIQRKIQEELDAVVGRARRPRFSDRPQLPYLEAVIMETFRHTSFLPFTIPHSTTRDTSLGGFYIPKGRCVFVNQWQNNHDPELWGDPEAFRPERFLTPSGAVDKALTEKVLLFGLGKRKCIGETIGRLEVFLFLATLLQQVEFSVSPGTTVDMTPIYGLTMKHARCEHFQAKLRFEA.

The segment at Ser-33–Leu-44 is mitochondrial targeting signal. An O-linked (GlcNAc) serine glycan is attached at Ser-71. Position 228 (Phe-228) interacts with substrate. Cys-461 is a heme binding site.

This sequence belongs to the cytochrome P450 family. In terms of assembly, interacts with cytosolic chaperones HSP70 and HSP90; this interaction is required for initial targeting to mitochondria. Interacts (via mitochondrial targeting signal) with TOMM40 (via N-terminus); this interaction is required for translocation across the mitochondrial outer membrane. The cofactor is heme.

Its subcellular location is the endoplasmic reticulum membrane. The protein localises to the mitochondrion inner membrane. It is found in the microsome membrane. The protein resides in the cytoplasm. The enzyme catalyses an organic molecule + reduced [NADPH--hemoprotein reductase] + O2 = an alcohol + oxidized [NADPH--hemoprotein reductase] + H2O + H(+). It carries out the reaction estrone + reduced [NADPH--hemoprotein reductase] + O2 = 2-hydroxyestrone + oxidized [NADPH--hemoprotein reductase] + H2O + H(+). It catalyses the reaction estrone + reduced [NADPH--hemoprotein reductase] + O2 = 4-hydroxyestrone + oxidized [NADPH--hemoprotein reductase] + H2O + H(+). The catalysed reaction is estrone + reduced [NADPH--hemoprotein reductase] + O2 = 6alpha-hydroxyestrone + oxidized [NADPH--hemoprotein reductase] + H2O + H(+). The enzyme catalyses estrone + reduced [NADPH--hemoprotein reductase] + O2 = 15alpha-hydroxyestrone + oxidized [NADPH--hemoprotein reductase] + H2O + H(+). It carries out the reaction estrone + reduced [NADPH--hemoprotein reductase] + O2 = 16alpha-hydroxyestrone + oxidized [NADPH--hemoprotein reductase] + H2O + H(+). It catalyses the reaction 17beta-estradiol + reduced [NADPH--hemoprotein reductase] + O2 = 2-hydroxy-17beta-estradiol + oxidized [NADPH--hemoprotein reductase] + H2O + H(+). The catalysed reaction is 17beta-estradiol + reduced [NADPH--hemoprotein reductase] + O2 = 4-hydroxy-17beta-estradiol + oxidized [NADPH--hemoprotein reductase] + H2O + H(+). The enzyme catalyses 17beta-estradiol + reduced [NADPH--hemoprotein reductase] + O2 = 6alpha-hydroxy-17beta-estradiol + oxidized [NADPH--hemoprotein reductase] + H2O + H(+). It carries out the reaction 17beta-estradiol + reduced [NADPH--hemoprotein reductase] + O2 = 7alpha-hydroxy-17beta-estradiol + oxidized [NADPH--hemoprotein reductase] + H2O + H(+). It catalyses the reaction 17beta-estradiol + reduced [NADPH--hemoprotein reductase] + O2 = 15alpha-hydroxy-17beta-estradiol + oxidized [NADPH--hemoprotein reductase] + H2O + H(+). The catalysed reaction is (5Z,8Z,11Z)-eicosatrienoate + reduced [NADPH--hemoprotein reductase] + O2 = 19-hydroxy-(5Z,8Z,11Z)-eicosatrienoate + oxidized [NADPH--hemoprotein reductase] + H2O + H(+). The enzyme catalyses (5Z,8Z,11Z,14Z)-eicosatetraenoate + reduced [NADPH--hemoprotein reductase] + O2 = 16-hydroxy-(5Z,8Z,11Z,14Z)-eicosatetraenoate + oxidized [NADPH--hemoprotein reductase] + H2O + H(+). It carries out the reaction (5Z,8Z,11Z,14Z)-eicosatetraenoate + reduced [NADPH--hemoprotein reductase] + O2 = 17-hydroxy-(5Z,8Z,11Z,14Z)-eicosatetraenoate + oxidized [NADPH--hemoprotein reductase] + H2O + H(+). It catalyses the reaction (5Z,8Z,11Z,14Z)-eicosatetraenoate + reduced [NADPH--hemoprotein reductase] + O2 = 18-hydroxy-(5Z,8Z,11Z,14Z)-eicosatetraenoate + oxidized [NADPH--hemoprotein reductase] + H2O + H(+). The catalysed reaction is (5Z,8Z,11Z,14Z)-eicosatetraenoate + reduced [NADPH--hemoprotein reductase] + O2 = 19-hydroxy-(5Z,8Z,11Z,14Z)-eicosatetraenoate + oxidized [NADPH--hemoprotein reductase] + H2O + H(+). The enzyme catalyses (5Z,8Z,11Z,14Z,17Z)-eicosapentaenoate + reduced [NADPH--hemoprotein reductase] + O2 = 19-hydroxy-(5Z,8Z,11Z,14Z,17Z)-eicosapentaenoate + oxidized [NADPH--hemoprotein reductase] + H2O + H(+). It carries out the reaction (5Z,8Z,11Z,14Z)-eicosatetraenoate + reduced [NADPH--hemoprotein reductase] + O2 = (8R,9S)-epoxy-(5Z,11Z,14Z)-eicosatrienoate + oxidized [NADPH--hemoprotein reductase] + H2O + H(+). It catalyses the reaction (5Z,8Z,11Z,14Z)-eicosatetraenoate + reduced [NADPH--hemoprotein reductase] + O2 = (11R,12S)-epoxy-(5Z,8Z,14Z)-eicosatrienoate + oxidized [NADPH--hemoprotein reductase] + H2O + H(+). The catalysed reaction is (5Z,8Z,11Z,14Z)-eicosatetraenoate + reduced [NADPH--hemoprotein reductase] + O2 = (14S,15R)-epoxy-(5Z,8Z,11Z)-eicosatrienoate + oxidized [NADPH--hemoprotein reductase] + H2O + H(+). The enzyme catalyses (5Z,8Z,11Z,14Z)-eicosatetraenoate + reduced [NADPH--hemoprotein reductase] + O2 = (14R,15S)-epoxy-(5Z,8Z,11Z)-eicosatrienoate + oxidized [NADPH--hemoprotein reductase] + H2O + H(+). It carries out the reaction (5Z,8Z,11Z,14Z,17Z)-eicosapentaenoate + reduced [NADPH--hemoprotein reductase] + O2 = (17R,18S)-epoxy-(5Z,8Z,11Z,14Z)-eicosatetraenoate + oxidized [NADPH--hemoprotein reductase] + H2O + H(+). It catalyses the reaction (4Z,7Z,10Z,13Z,16Z,19Z)-docosahexaenoate + reduced [NADPH--hemoprotein reductase] + O2 = (19S,20R)-epoxy-(4Z,7Z,10Z,13Z,16Z)-docosapentaenoate + oxidized [NADPH--hemoprotein reductase] + H2O + H(+). The catalysed reaction is (4Z,7Z,10Z,13Z,16Z,19Z)-docosahexaenoate + reduced [NADPH--hemoprotein reductase] + O2 = (19R,20S)-epoxy-(4Z,7Z,10Z,13Z,16Z)-docosapentaenoate + oxidized [NADPH--hemoprotein reductase] + H2O + H(+). The enzyme catalyses all-trans-retinol + reduced [NADPH--hemoprotein reductase] + O2 = all-trans-retinal + oxidized [NADPH--hemoprotein reductase] + 2 H2O + H(+). It carries out the reaction all-trans-retinal + reduced [NADPH--hemoprotein reductase] + O2 = all-trans-retinoate + oxidized [NADPH--hemoprotein reductase] + H2O + 2 H(+). It catalyses the reaction (13S)-hydroperoxy-(9Z,11E)-octadecadienoate = 13-oxo-(9Z,11E)-octadecadienoate + H2O. The catalysed reaction is (12S)-hydroperoxy-(5Z,8Z,10E,14Z)-eicosatetraenoate = 12-oxo-(5Z,8Z,10E,14Z)-eicosatetraenoate + H2O. The enzyme catalyses (15S)-hydroperoxy-(5Z,8Z,11Z,13E)-eicosatetraenoate = 15-oxo-(5Z,8Z,11Z,13E)-eicosatetraenoate + H2O. It carries out the reaction (5S)-hydroperoxy-(6E,8Z,11Z,14Z)-eicosatetraenoate = 5-oxo-(6E,8Z,11Z,14Z)-eicosatetraenoate + H2O. Its pathway is steroid hormone biosynthesis. It participates in lipid metabolism; fatty acid metabolism. It functions in the pathway cofactor metabolism; retinol metabolism. In terms of biological role, a cytochrome P450 monooxygenase involved in the metabolism of various endogenous substrates, including fatty acids, steroid hormones and vitamins. Mechanistically, uses molecular oxygen inserting one oxygen atom into a substrate, and reducing the second into a water molecule, with two electrons provided by NADPH via cytochrome P450 reductase (CPR; NADPH-ferrihemoprotein reductase). Catalyzes the hydroxylation of carbon-hydrogen bonds. Exhibits high catalytic activity for the formation of hydroxyestrogens from estrone (E1) and 17beta-estradiol (E2), namely 2-hydroxy E1 and E2, as well as D-ring hydroxylated E1 and E2 at the C15alpha and C16alpha positions. Displays different regioselectivities for polyunsaturated fatty acids (PUFA) hydroxylation. Catalyzes the epoxidation of double bonds of certain PUFA. Converts arachidonic acid toward epoxyeicosatrienoic acid (EET) regioisomers, 8,9-, 11,12-, and 14,15-EET, that function as lipid mediators in the vascular system. Displays an absolute stereoselectivity in the epoxidation of eicosapentaenoic acid (EPA) producing the 17(R),18(S) enantiomer. May play an important role in all-trans retinoic acid biosynthesis in extrahepatic tissues. Catalyzes two successive oxidative transformation of all-trans retinol to all-trans retinal and then to the active form all-trans retinoic acid. May also participate in eicosanoids metabolism by converting hydroperoxide species into oxo metabolites (lipoxygenase-like reaction, NADPH-independent). The chain is Cytochrome P450 1A1 (CYP1A1) from Oryctolagus cuniculus (Rabbit).